Reading from the N-terminus, the 449-residue chain is N-succinylarginine dihydrolase (449 aa).

Substrate contacts are provided by residues 19-28 (GGLSYGNVAS), Asn-110, and 137-138 (HR). Residues 23–43 (YGNVASQSNSQQGSNPREAAR) are disordered. Over residues 25 to 37 (NVASQSNSQQGSN) the composition is skewed to polar residues. Residue Glu-174 is part of the active site. Arg-214 lines the substrate pocket. His-250 is an active-site residue. Substrate is bound by residues Asp-252 and Asn-365. Cys-371 functions as the Nucleophile in the catalytic mechanism.

Belongs to the succinylarginine dihydrolase family. In terms of assembly, homodimer.

The enzyme catalyses N(2)-succinyl-L-arginine + 2 H2O + 2 H(+) = N(2)-succinyl-L-ornithine + 2 NH4(+) + CO2. The protein operates within amino-acid degradation; L-arginine degradation via AST pathway; L-glutamate and succinate from L-arginine: step 2/5. Functionally, catalyzes the hydrolysis of N(2)-succinylarginine into N(2)-succinylornithine, ammonia and CO(2). The sequence is that of N-succinylarginine dihydrolase from Pseudomonas entomophila (strain L48).